The primary structure comprises 469 residues: Arginine biosynthesis bifunctional protein ArgJ, chloroplastic (469 aa).

Substrate-binding residues include threonine 213, lysine 239, threonine 250, glutamate 337, asparagine 464, and threonine 469. Residue threonine 250 is the Nucleophile of the active site.

The protein belongs to the ArgJ family. As to quaternary structure, heterodimer of an alpha and a beta chain.

The protein localises to the plastid. It is found in the chloroplast. It carries out the reaction N(2)-acetyl-L-ornithine + L-glutamate = N-acetyl-L-glutamate + L-ornithine. The enzyme catalyses L-glutamate + acetyl-CoA = N-acetyl-L-glutamate + CoA + H(+). It functions in the pathway amino-acid biosynthesis; L-arginine biosynthesis; L-ornithine and N-acetyl-L-glutamate from L-glutamate and N(2)-acetyl-L-ornithine (cyclic): step 1/1. The protein operates within amino-acid biosynthesis; L-arginine biosynthesis; N(2)-acetyl-L-ornithine from L-glutamate: step 1/4. In terms of biological role, catalyzes two activities which are involved in the cyclic version of arginine biosynthesis: the synthesis of acetylglutamate from glutamate and acetyl-CoA, and of ornithine by transacetylation between acetylornithine and glutamate. This is Arginine biosynthesis bifunctional protein ArgJ, chloroplastic from Ricinus communis (Castor bean).